The sequence spans 211 residues: Small ribosomal subunit protein uS3 (211 aa).

The KH type-2 domain occupies 38 to 106; the sequence is LRNFLKKRLF…EIYLNIQEVR (69 aa).

The protein belongs to the universal ribosomal protein uS3 family. In terms of assembly, part of the 30S ribosomal subunit. Forms a tight complex with proteins S10 and S14.

In terms of biological role, binds the lower part of the 30S subunit head. Binds mRNA in the 70S ribosome, positioning it for translation. In Geobacter metallireducens (strain ATCC 53774 / DSM 7210 / GS-15), this protein is Small ribosomal subunit protein uS3.